Reading from the N-terminus, the 308-residue chain is Inactive C-alpha-formylglycine-generating enzyme 2 (308 aa).

A signal peptide spans 1-33; the sequence is MRSEFWFPSMGSLLPPVLLLWLLSCPRLQLGHA. A disulfide bridge connects residues Cys-163 and Cys-297. An N-linked (GlcNAc...) asparagine glycan is attached at Asn-198. Ca(2+)-binding residues include Asn-201, Leu-202, Asp-215, Phe-217, Asp-236, Gly-239, Val-241, and Glu-243. Residues 281–291 are compositionally biased toward polar residues; that stretch reads RMGNTPDSASD. Residues 281 to 308 are disordered; that stretch reads RMGNTPDSASDNLGFRCASSAGRPKEDL. Residues 305–308 carry the Non-canonical ER retention motif motif; sequence KEDL.

The protein belongs to the sulfatase-modifying factor family. As to quaternary structure, homodimer and heterodimer with SUMF1.

The protein localises to the endoplasmic reticulum lumen. Functionally, lacks formylglycine generating activity and is unable to convert newly synthesized inactive sulfatases to their active form. Inhibits the activation of sulfatases by SUMF1. In Mus musculus (Mouse), this protein is Inactive C-alpha-formylglycine-generating enzyme 2.